A 68-amino-acid polypeptide reads, in one-letter code: Metallothionein-3 (68 aa).

Met-1 carries the N-acetylmethionine modification. A beta region spans residues 1-30 (MDPETCPCPSGGSCTCADSCKCEGCKCTSC). Residues Cys-6, Cys-8, Cys-14, Cys-16, Cys-20, Cys-22, Cys-25, Cys-27, and Cys-30 each coordinate a divalent metal cation. The segment at 31-68 (KKSCCSCCPAECEKCAKDCVCKGGEAAEAEAEKCSCCQ) is alpha. At Ser-33 the chain carries Phosphoserine. Residues Cys-34, Cys-35, Cys-37, Cys-38, Cys-42, Cys-45, Cys-49, Cys-51, Cys-64, Cys-66, and Cys-67 each coordinate a divalent metal cation.

The protein belongs to the metallothionein superfamily. Type 1 family. In terms of tissue distribution, abundant in a subset of astrocytes in the normal human brain, but greatly reduced in the Alzheimer disease (AD) brain.

Functionally, binds heavy metals. Contains three zinc and three copper atoms per polypeptide chain and only a negligible amount of cadmium. Inhibits survival and neurite formation of cortical neurons in vitro. This Homo sapiens (Human) protein is Metallothionein-3 (MT3).